Reading from the N-terminus, the 155-residue chain is 6,7-dimethyl-8-ribityllumazine synthase (155 aa).

5-amino-6-(D-ribitylamino)uracil is bound by residues Phe22, 57–59, and 81–83; these read AYE and SVI. 86-87 provides a ligand contact to (2S)-2-hydroxy-3-oxobutyl phosphate; the sequence is GT. Residue His88 is the Proton donor of the active site. Residue Phe113 participates in 5-amino-6-(D-ribitylamino)uracil binding. Arg127 is a (2S)-2-hydroxy-3-oxobutyl phosphate binding site.

Belongs to the DMRL synthase family. In terms of assembly, forms an icosahedral capsid composed of 60 subunits, arranged as a dodecamer of pentamers.

It carries out the reaction (2S)-2-hydroxy-3-oxobutyl phosphate + 5-amino-6-(D-ribitylamino)uracil = 6,7-dimethyl-8-(1-D-ribityl)lumazine + phosphate + 2 H2O + H(+). It participates in cofactor biosynthesis; riboflavin biosynthesis; riboflavin from 2-hydroxy-3-oxobutyl phosphate and 5-amino-6-(D-ribitylamino)uracil: step 1/2. Its function is as follows. Catalyzes the formation of 6,7-dimethyl-8-ribityllumazine by condensation of 5-amino-6-(D-ribitylamino)uracil with 3,4-dihydroxy-2-butanone 4-phosphate. This is the penultimate step in the biosynthesis of riboflavin. This is 6,7-dimethyl-8-ribityllumazine synthase from Photobacterium phosphoreum.